Reading from the N-terminus, the 358-residue chain is Mesaconyl-CoA hydratase (358 aa).

The protein belongs to the enoyl-CoA hydratase/isomerase family. Homodimer.

It catalyses the reaction (2R,3S)-beta-methylmalyl-CoA = 2-methylfumaryl-CoA + H2O. Shows highest activity at 0.5 M KCl. Does not require divalent ions for activity. Involved in the methylaspartate cycle. Catalyzes the reversible hydration of mesaconyl-CoA (2-methylfumaryl-CoA) to yield beta-methylmalyl-CoA ((2R,3S)-beta-methylmalyl-CoA). Also shows activity with mesaconyl-C4-CoA (3-methylfumaryl-CoA), (S)-citramalyl-CoA and (S)-malyl-CoA. This chain is Mesaconyl-CoA hydratase, found in Haloarcula hispanica (strain ATCC 33960 / DSM 4426 / JCM 8911 / NBRC 102182 / NCIMB 2187 / VKM B-1755).